Reading from the N-terminus, the 120-residue chain is Large ribosomal subunit protein bL19 (120 aa).

Belongs to the bacterial ribosomal protein bL19 family.

This protein is located at the 30S-50S ribosomal subunit interface and may play a role in the structure and function of the aminoacyl-tRNA binding site. In Crocosphaera subtropica (strain ATCC 51142 / BH68) (Cyanothece sp. (strain ATCC 51142)), this protein is Large ribosomal subunit protein bL19.